Reading from the N-terminus, the 101-residue chain is NADH-quinone oxidoreductase subunit K 1 (101 aa).

Helical transmembrane passes span 4-24 (IGTMHYLVVAAMLFIIGTVGV), 31-51 (VVILMSIELILNAVNLNLVAF), and 64-84 (IFVMVDAAAEAAVGLGIVIAF).

It belongs to the complex I subunit 4L family. NDH-1 is composed of 14 different subunits. Subunits NuoA, H, J, K, L, M, N constitute the membrane sector of the complex.

It localises to the cell inner membrane. It catalyses the reaction a quinone + NADH + 5 H(+)(in) = a quinol + NAD(+) + 4 H(+)(out). In terms of biological role, NDH-1 shuttles electrons from NADH, via FMN and iron-sulfur (Fe-S) centers, to quinones in the respiratory chain. The immediate electron acceptor for the enzyme in this species is believed to be ubiquinone. Couples the redox reaction to proton translocation (for every two electrons transferred, four hydrogen ions are translocated across the cytoplasmic membrane), and thus conserves the redox energy in a proton gradient. The sequence is that of NADH-quinone oxidoreductase subunit K 1 from Koribacter versatilis (strain Ellin345).